We begin with the raw amino-acid sequence, 220 residues long: Adenylate kinase (220 aa).

12-17 (GAGKGT) is a binding site for ATP. Residues 32–62 (STGDIFRDIVKKENDELGKKIKEIMERGELV) are NMP. Residues threonine 33, arginine 38, 60–62 (ELV), 88–91 (GYPR), and glutamine 95 each bind AMP. The segment at 129-166 (ARRICPKCGRIYNLISLPPKEDELCDDCKVKLVQREDD) is LID. Residue arginine 130 coordinates ATP. Residues cysteine 133 and cysteine 136 each contribute to the Zn(2+) site. An ATP-binding site is contributed by 139–140 (IY). Residues cysteine 153 and cysteine 156 each coordinate Zn(2+). AMP contacts are provided by arginine 163 and arginine 174. Residue isoleucine 202 coordinates ATP.

Belongs to the adenylate kinase family. As to quaternary structure, monomer.

Its subcellular location is the cytoplasm. The catalysed reaction is AMP + ATP = 2 ADP. It participates in purine metabolism; AMP biosynthesis via salvage pathway; AMP from ADP: step 1/1. Its function is as follows. Catalyzes the reversible transfer of the terminal phosphate group between ATP and AMP. Plays an important role in cellular energy homeostasis and in adenine nucleotide metabolism. The protein is Adenylate kinase of Thermotoga petrophila (strain ATCC BAA-488 / DSM 13995 / JCM 10881 / RKU-1).